We begin with the raw amino-acid sequence, 456 residues long: Gamma-aminobutyric acid receptor subunit alpha-1 (456 aa).

Residues 1–27 form the signal peptide; sequence MRKSPGLSDCLWAWILLLSTLTGRSYG. Topologically, residues 28 to 253 are extracellular; it reads QPSLQDELKD…FHLKRKIGYF (226 aa). N38 carries N-linked (GlcNAc...) asparagine glycosylation. R94 is a binding site for 4-aminobutanoate. N-linked (GlcNAc...) asparagine glycosylation occurs at N138. T157 is a 4-aminobutanoate binding site. A disulfide bridge connects residues C166 and C180. The chain crosses the membrane as a helical span at residues 254–274; the sequence is VIQTYLPCIMTVILSQVSFWL. W273 is a binding site for 3alpha-hydroxy-5alpha-pregnan-11,20-dione. At 275–279 the chain is on the cytoplasmic side; it reads NRESV. A helical transmembrane segment spans residues 280 to 301; the sequence is PARTVFGVTTVLTMTTLSISAR. At 302 to 311 the chain is on the extracellular side; sequence NSLPKVAYAT. The helical transmembrane segment at 312–333 threads the bilayer; the sequence is AMDWFIAVCYAFVFSALIEFAT. Residues 334 to 421 lie on the Cytoplasmic side of the membrane; that stretch reads VNYFTKRGYA…TFNSVSKIDR (88 aa). Residues 422–441 form a helical membrane-spanning segment; it reads LSRIAFPLLFGIFNLVYWAT. Residues 442–456 lie on the Extracellular side of the membrane; it reads YLNREPQLKAPTPHQ.

Belongs to the ligand-gated ion channel (TC 1.A.9) family. Gamma-aminobutyric acid receptor (TC 1.A.9.5) subfamily. GABRA1 sub-subfamily. As to quaternary structure, heteropentamer, formed by a combination of alpha (GABRA1-6), beta (GABRB1-3), gamma (GABRG1-3), delta (GABRD), epsilon (GABRE), rho (GABRR1-3), pi (GABRP) and theta (GABRQ) subunits, each subunit exhibiting distinct physiological and pharmacological properties. Interacts with UBQLN1. Interacts with TRAK1. Interacts with KIF21B. Identified in a complex of 720 kDa composed of LHFPL4, NLGN2, GABRA1, GABRB2, GABRG2 and GABRB3. Interacts with LHFPL4. Interacts with NLGN2. Interacts with SHISA7; interaction leads regulation of GABAAR trafficking, channel deactivation kinetics and pharmacology.

The protein resides in the postsynaptic cell membrane. It is found in the cell membrane. It localises to the cytoplasmic vesicle membrane. The catalysed reaction is chloride(in) = chloride(out). With respect to regulation, allosterically activated by benzodiazepines and the anesthetic alphaxalone. Allosterically activated by pentobarbital. Inhibited by the antagonist bicuculline. Potentiated by histamine. Its function is as follows. Alpha subunit of the heteropentameric ligand-gated chloride channel gated by Gamma-aminobutyric acid (GABA), a major inhibitory neurotransmitter in the brain. GABA-gated chloride channels, also named GABA(A) receptors (GABAAR), consist of five subunits arranged around a central pore and contain GABA active binding site(s) located at the alpha and beta subunit interface(s). When activated by GABA, GABAARs selectively allow the flow of chloride anions across the cell membrane down their electrochemical gradient. Alpha-1/GABRA1-containing GABAARs are largely synaptic. Chloride influx into the postsynaptic neuron following GABAAR opening decreases the neuron ability to generate a new action potential, thereby reducing nerve transmission. GABAARs containing alpha-1 and beta-2 or -3 subunits exhibit synaptogenic activity; the gamma-2 subunit being necessary but not sufficient to induce rapid synaptic contacts formation. GABAARs function also as histamine receptor where histamine binds at the interface of two neighboring beta subunits and potentiates GABA response. GABAARs containing alpha, beta and epsilon subunits also permit spontaneous chloride channel activity while preserving the structural information required for GABA-gated openings. Alpha-1-mediated plasticity in the orbitofrontal cortex regulates context-dependent action selection. Together with rho subunits, may also control neuronal and glial GABAergic transmission in the cerebellum. This Homo sapiens (Human) protein is Gamma-aminobutyric acid receptor subunit alpha-1.